The chain runs to 97 residues: Large ribosomal subunit protein bL27 (97 aa).

Residues 1-23 are disordered; sequence MAHKKGASSSRNGRDSTSKRLGV.

Belongs to the bacterial ribosomal protein bL27 family.

This Acidothermus cellulolyticus (strain ATCC 43068 / DSM 8971 / 11B) protein is Large ribosomal subunit protein bL27.